The primary structure comprises 450 residues: Tryptophan dimethylallyltransferase 2 (450 aa).

L-tryptophan contacts are provided by residues 80 to 81 (IL) and Glu-89. The substrate site is built by Arg-100, Lys-186, and Tyr-188. Positions 190 and 251 each coordinate L-tryptophan. Positions 264, 266, 268, 350, 352, 416, and 420 each coordinate substrate.

This sequence belongs to the tryptophan dimethylallyltransferase family. As to quaternary structure, homodimer.

The catalysed reaction is L-tryptophan + dimethylallyl diphosphate = 4-(3-methylbut-2-enyl)-L-tryptophan + diphosphate. Its pathway is alkaloid biosynthesis; ergot alkaloid biosynthesis. Functionally, catalyzes the first step of ergot alkaloid biosynthesis. Ergot alkaloids, which are produced by endophyte fungi, can enhance plant host fitness, but also cause livestock toxicosis to host plants. The polypeptide is Tryptophan dimethylallyltransferase 2 (dmaW2) (Epichloe coenophiala (Tall fescue endophyte fungus)).